We begin with the raw amino-acid sequence, 832 residues long: Protein P (832 aa).

The terminal protein domain (TP) stretch occupies residues 1–177 (MPLSCQHFRK…FCGSPYSWEQ (177 aa)). The tract at residues 178-335 (ELQHGAEPFC…NCLSHIVNLL (158 aa)) is spacer. The disordered stretch occupies residues 198–264 (SIGPAVPSQH…HNTASSSSSC (67 aa)). Residues 336–679 (EDWGPCTEHG…YLTLYPVARQ (344 aa)) form a polymerase/reverse transcriptase domain (RT) region. Residues 346 to 589 (EHLIRIPRTP…YSLHFMGYVI (244 aa)) enclose the Reverse transcriptase domain. Mg(2+)-binding residues include Asp-418, Asp-540, and Asp-541.

It belongs to the hepadnaviridae P protein family.

The catalysed reaction is DNA(n) + a 2'-deoxyribonucleoside 5'-triphosphate = DNA(n+1) + diphosphate. It catalyses the reaction Endonucleolytic cleavage to 5'-phosphomonoester.. Its activity is regulated as follows. Activated by host HSP70 and HSP40 in vitro to be able to bind the epsilon loop of the pgRNA. Because deletion of the RNase H region renders the protein partly chaperone-independent, the chaperones may be needed indirectly to relieve occlusion of the RNA-binding site by this domain. Inhibited by several reverse-transcriptase inhibitors: Lamivudine, Adefovir and Entecavir. In terms of biological role, multifunctional enzyme that converts the viral RNA genome into dsDNA in viral cytoplasmic capsids. This enzyme displays a DNA polymerase activity that can copy either DNA or RNA templates, and a ribonuclease H (RNase H) activity that cleaves the RNA strand of RNA-DNA heteroduplexes in a partially processive 3'- to 5'-endonucleasic mode. Neo-synthesized pregenomic RNA (pgRNA) are encapsidated together with the P protein, and reverse-transcribed inside the nucleocapsid. Initiation of reverse-transcription occurs first by binding the epsilon loop on the pgRNA genome, and is initiated by protein priming, thereby the 5'-end of (-)DNA is covalently linked to P protein. Partial (+)DNA is synthesized from the (-)DNA template and generates the relaxed circular DNA (RC-DNA) genome. After budding and infection, the RC-DNA migrates in the nucleus, and is converted into a plasmid-like covalently closed circular DNA (cccDNA). The activity of P protein does not seem to be necessary for cccDNA generation, and is presumably released from (+)DNA by host nuclear DNA repair machinery. This chain is Protein P, found in Pongo pygmaeus (Bornean orangutan).